A 907-amino-acid polypeptide reads, in one-letter code: Protein translocase subunit SecA (907 aa).

ATP is bound by residues Q87, 105–109 (GEGKT), and D512. C891, C893, C902, and H903 together coordinate Zn(2+).

This sequence belongs to the SecA family. As to quaternary structure, monomer and homodimer. Part of the essential Sec protein translocation apparatus which comprises SecA, SecYEG and auxiliary proteins SecDF-YajC and YidC. Requires Zn(2+) as cofactor.

The protein resides in the cell inner membrane. The protein localises to the cytoplasm. The enzyme catalyses ATP + H2O + cellular proteinSide 1 = ADP + phosphate + cellular proteinSide 2.. Its function is as follows. Part of the Sec protein translocase complex. Interacts with the SecYEG preprotein conducting channel. Has a central role in coupling the hydrolysis of ATP to the transfer of proteins into and across the cell membrane, serving both as a receptor for the preprotein-SecB complex and as an ATP-driven molecular motor driving the stepwise translocation of polypeptide chains across the membrane. This is Protein translocase subunit SecA from Shewanella loihica (strain ATCC BAA-1088 / PV-4).